A 238-amino-acid polypeptide reads, in one-letter code: Probable transcriptional regulatory protein SPD_1725 (238 aa).

This sequence belongs to the TACO1 family. YeeN subfamily.

It localises to the cytoplasm. In Streptococcus pneumoniae serotype 2 (strain D39 / NCTC 7466), this protein is Probable transcriptional regulatory protein SPD_1725.